Consider the following 56-residue polypeptide: Protein p56 (56 aa).

This sequence belongs to the phi29likevirus protein p56 family. Homodimer. Interacts with host UDG; this interaction inhibits the uracil-DNA glycosylase.

Inhibits the host uracil-DNA glycosylase (UDG), an enzyme which removes uracil residues from DNA by the base excision repair. Interacts with host uracil-DNA glycosylase and prevents the latter from binding to DNA. Since the viral DNA polymerase efficiently incorporates dUMP into DNA, the virus needs to prevent the deleterious effect caused by host UDG when it eliminates uracil residues present in the viral genome. The protein is Protein p56 of Bacillus phage phi29 (Bacteriophage phi-29).